The primary structure comprises 279 residues: 3-methyl-2-oxobutanoate hydroxymethyltransferase (279 aa).

2 residues coordinate Mg(2+): Asp-44 and Asp-83. Residues 44-45 (DS), Asp-83, and Lys-113 each bind 3-methyl-2-oxobutanoate. Residue Glu-115 coordinates Mg(2+). Glu-182 functions as the Proton acceptor in the catalytic mechanism.

Belongs to the PanB family. In terms of assembly, homodecamer; pentamer of dimers. Mg(2+) serves as cofactor.

It is found in the cytoplasm. It catalyses the reaction 3-methyl-2-oxobutanoate + (6R)-5,10-methylene-5,6,7,8-tetrahydrofolate + H2O = 2-dehydropantoate + (6S)-5,6,7,8-tetrahydrofolate. Its pathway is cofactor biosynthesis; (R)-pantothenate biosynthesis; (R)-pantoate from 3-methyl-2-oxobutanoate: step 1/2. Catalyzes the reversible reaction in which hydroxymethyl group from 5,10-methylenetetrahydrofolate is transferred onto alpha-ketoisovalerate to form ketopantoate. The sequence is that of 3-methyl-2-oxobutanoate hydroxymethyltransferase from Desulfotalea psychrophila (strain LSv54 / DSM 12343).